The sequence spans 1325 residues: Nonribosomal peptide synthetase (1325 aa).

An adenylation region spans residues 248 to 644; the sequence is YQQLDRLSTR…LGEIEYQIQQ (397 aa). The Carrier domain occupies 779 to 856; sequence EIVNPGEITL…DQARLLRPLS (78 aa). Serine 816 carries the post-translational modification O-(pantetheine 4'-phosphoryl)serine. A condensation region spans residues 893 to 1310; that stretch reads EDVYPCTPLQ…DDYSTTLHTL (418 aa).

This sequence belongs to the NRP synthetase family. Requires pantetheine 4'-phosphate as cofactor.

Its pathway is antifungal biosynthesis. Functionally, nonribosomal peptide synthetase; part of the gene cluster that mediates the biosynthesis of the tetrahydropyranyl antifungal agent lanomycin that acts as an inhibitor of CYP51 and blocks the ergosterol biosynthesis. The biosynthesis probably begins with the formation of an hexaketide, followed by methionine mediated alkylation of C-2 and C-6, and methylation of the reduced C-3 oxygen, pyran forming reductive ring closure, oxygenation of C-4, beta-keto reduction, enoyl reduction and dehydration of the remaining oxygens, and finally, acylation with glycine to complete the biosynthesis. In Pyrenophora dematioidea (Helminthosporium dematioideum), this protein is Nonribosomal peptide synthetase.